The sequence spans 328 residues: MRSRQRGAALLVVLLILALMVTIAAVITERTGKAFLRTESHLSRQQAKWYALGAETLSGQILQRDARNMPGRTFAGQNWSQPGLRFPVDGGEITGQISDARTCFNVNAINQGVDNESTLVKTPYPAQVFRLLLKNLGEETDRAEKITAAVRDWIDADNYPSANGAEDDVYAALPVPYRTANQRMSEISELRSVYGIDSDLYRRLLPYVCALPVDAMSININTLTEFDAPLLSAVFLNEMTMSQAKALVQQRPRMGWASLEVLQQTGLLPPNSKNTAQRVLAVKSEWFFVKLQVRVGDSDFHQRSLLHLSGQKVQVVQRQYGGYRTVNP.

Residues 1–7 (MRSRQRG) constitute a propeptide, leader sequence. The chain crosses the membrane as a helical span at residues 8–28 (AALLVVLLILALMVTIAAVIT). The Periplasmic portion of the chain corresponds to 29–328 (ERTGKAFLRT…QYGGYRTVNP (300 aa)).

It belongs to the GSP K family. In terms of assembly, type II secretion is composed of four main components: the outer membrane complex, the inner membrane complex, the cytoplasmic secretion ATPase and the periplasm-spanning pseudopilus. Interacts with core component OutG. Post-translationally, cleaved by prepilin peptidase.

The protein resides in the cell inner membrane. Component of the type II secretion system required for the energy-dependent secretion of extracellular factors such as proteases and toxins from the periplasm. Plays a role in pseudopilus assembly and seems to control its length. Interacts with the pseudopilus tip complex that is critical for the recognition and binding of secretion substrates. The chain is Type II secretion system protein K (outK) from Pectobacterium carotovorum subsp. carotovorum (Erwinia carotovora subsp. carotovora).